The chain runs to 397 residues: Argininosuccinate synthase (397 aa).

7–15 is an ATP binding site; sequence AFSGGLDTT. Tyr84 is a binding site for L-citrulline. Gly114 provides a ligand contact to ATP. Thr116, Asn120, and Asp121 together coordinate L-aspartate. Asn120 provides a ligand contact to L-citrulline. Residues Arg124, Ser170, Ser179, Glu254, and Tyr266 each coordinate L-citrulline.

The protein belongs to the argininosuccinate synthase family. Type 1 subfamily. In terms of assembly, homotetramer.

The protein resides in the cytoplasm. It carries out the reaction L-citrulline + L-aspartate + ATP = 2-(N(omega)-L-arginino)succinate + AMP + diphosphate + H(+). The protein operates within amino-acid biosynthesis; L-arginine biosynthesis; L-arginine from L-ornithine and carbamoyl phosphate: step 2/3. The protein is Argininosuccinate synthase of Haloquadratum walsbyi (strain DSM 16790 / HBSQ001).